The sequence spans 154 residues: MKTFTATPADIEKKWILIDAEGVVLGRLATIVANILRGKNKPTFTPHMDMGDNVIVINADKVQMTGNKRADKRYYWHTGHPGGVKFRTAEQVLEGAHPERVVLKAVERMISRNSLGRQQMTNLRVYAGAEHPHEAQQPTVLDVKSLNPKNTRSA.

Belongs to the universal ribosomal protein uL13 family. In terms of assembly, part of the 50S ribosomal subunit.

This protein is one of the early assembly proteins of the 50S ribosomal subunit, although it is not seen to bind rRNA by itself. It is important during the early stages of 50S assembly. This chain is Large ribosomal subunit protein uL13, found in Cereibacter sphaeroides (strain ATCC 17029 / ATH 2.4.9) (Rhodobacter sphaeroides).